Consider the following 241-residue polypeptide: dTTP/UTP pyrophosphatase (241 aa).

S38 carries the post-translational modification Phosphoserine. D105 acts as the Proton acceptor in catalysis.

Belongs to the Maf family. YhdE subfamily. A divalent metal cation serves as cofactor.

Its subcellular location is the cytoplasm. The protein resides in the nucleus. It catalyses the reaction dTTP + H2O = dTMP + diphosphate + H(+). It carries out the reaction UTP + H2O = UMP + diphosphate + H(+). Nucleoside triphosphate pyrophosphatase that hydrolyzes dTTP and UTP. May have a dual role in cell division arrest and in preventing the incorporation of modified nucleotides into cellular nucleic acids. This is dTTP/UTP pyrophosphatase from Schizosaccharomyces pombe (strain 972 / ATCC 24843) (Fission yeast).